A 305-amino-acid chain; its full sequence is Sulfate adenylyltransferase subunit 2 1 (305 aa).

The segment at 283 to 305 (RSGRAIDHDQAGSMERKKREGYF) is disordered.

This sequence belongs to the PAPS reductase family. CysD subfamily. Heterodimer composed of CysD, the smaller subunit, and CysN.

It carries out the reaction sulfate + ATP + H(+) = adenosine 5'-phosphosulfate + diphosphate. The protein operates within sulfur metabolism; hydrogen sulfide biosynthesis; sulfite from sulfate: step 1/3. With CysN forms the ATP sulfurylase (ATPS) that catalyzes the adenylation of sulfate producing adenosine 5'-phosphosulfate (APS) and diphosphate, the first enzymatic step in sulfur assimilation pathway. APS synthesis involves the formation of a high-energy phosphoric-sulfuric acid anhydride bond driven by GTP hydrolysis by CysN coupled to ATP hydrolysis by CysD. The polypeptide is Sulfate adenylyltransferase subunit 2 1 (Chromohalobacter salexigens (strain ATCC BAA-138 / DSM 3043 / CIP 106854 / NCIMB 13768 / 1H11)).